The primary structure comprises 699 residues: MSKINKLEHIRNIGICAHIDAGKTTTTERILYYTGKSHKIGEVHEGGATMDWMEQEQERGITITSAATTCRWQDKIINIIDTPGHVDFTIEVERSLRVLDGAVAVFDGVAGVEPQSETVWRQADKYNVPRMCFVNKMDRMGADFYRCVEMLKDRLGAKPLVIQLPVGIEENFKGIIDLIKMKAVIWKDEALGAEYFEEDIPADMKDKAEEYRAKLLDMVVELDDHVMEKYLSGEEVTAEEIKRLIRKGTISAVFYPVLCGSAFKNKGVQPLLDAVVDFLPSPIDIGIVKGREVSTGEEKDFLISVTEPFAALAFKIMNDPFVGSLTFIRIYSGKITSGTTVINTVKNKREKIGRMLLMHANNREDVKEASAGDIVALAGLKDTTTGDTLSDIDQQVILERMEFPEPVIELAVEPKSTADQEKMGLALSRLAAEDPSFRVSTDYETGQTVIKGMGELHLEIIIDRMRREFKVEANIGAPQVAYRETITKVCEIDYTHKKQSGGAGQFARVKIIFEPLKEVKDLKDEDKNKIFVFESKIIGGAVPKEYIPGVEKGLNNIRETGVIAVYPMIDFKATLVDGAFHDVDSSVLAFEIAAKAAFREGMPKGNPKLLEPIMQVEVITPDEYMGDIIGDLNSRRGQIQSMDPRGNAQVVTANVPLAEMFGYVNTLRSLSQGRAQFSMIFSHYDQVPSQVADIIKAKK.

The tr-type G domain maps to 8–283 (EHIRNIGICA…AVVDFLPSPI (276 aa)). Residues 17–24 (AHIDAGKT), 81–85 (DTPGH), and 135–138 (NKMD) each bind GTP.

This sequence belongs to the TRAFAC class translation factor GTPase superfamily. Classic translation factor GTPase family. EF-G/EF-2 subfamily.

It is found in the cytoplasm. Catalyzes the GTP-dependent ribosomal translocation step during translation elongation. During this step, the ribosome changes from the pre-translocational (PRE) to the post-translocational (POST) state as the newly formed A-site-bound peptidyl-tRNA and P-site-bound deacylated tRNA move to the P and E sites, respectively. Catalyzes the coordinated movement of the two tRNA molecules, the mRNA and conformational changes in the ribosome. The sequence is that of Elongation factor G from Rickettsia parkeri.